Consider the following 369-residue polypeptide: Epoxyqueuosine reductase (369 aa).

Aspartate 135 serves as the catalytic Proton donor. Positions 177–209 (IPLPVDEPSENQCGKCTACITSCPTNAIVAEGV) constitute a 4Fe-4S ferredoxin-type domain. [4Fe-4S] cluster is bound by residues cysteine 189, cysteine 192, cysteine 195, cysteine 199, cysteine 215, cysteine 242, cysteine 245, and cysteine 249.

It belongs to the QueG family. Monomer. Cob(II)alamin is required as a cofactor. [4Fe-4S] cluster serves as cofactor.

It is found in the cytoplasm. It carries out the reaction epoxyqueuosine(34) in tRNA + AH2 = queuosine(34) in tRNA + A + H2O. The protein operates within tRNA modification; tRNA-queuosine biosynthesis. Catalyzes the conversion of epoxyqueuosine (oQ) to queuosine (Q), which is a hypermodified base found in the wobble positions of tRNA(Asp), tRNA(Asn), tRNA(His) and tRNA(Tyr). The sequence is that of Epoxyqueuosine reductase from Vibrio cholerae serotype O1 (strain ATCC 39315 / El Tor Inaba N16961).